A 204-amino-acid polypeptide reads, in one-letter code: Linker for activation of T-cells family member 2 (204 aa).

Residues 1 to 7 are Extracellular-facing; that stretch reads MNAELEL. Residues 8–28 traverse the membrane as a helical; Signal-anchor for type III membrane protein segment; the sequence is LWPLSGLLLLLLLGTTAWLCV. 2 S-palmitoyl cysteine lipidation sites follow: Cys27 and Cys30. Residues 29–204 are Cytoplasmic-facing; sequence QCSRPGVKRN…NGDVATTEKI (176 aa). Position 60 is a phosphotyrosine (Tyr60). Phosphoserine is present on residues Ser61 and Ser96. Residues Tyr140, Tyr161, and Tyr193 each carry the phosphotyrosine modification. Residues 147–204 are disordered; that stretch reads KPSTPESGTEESEDYQNSVSILQWRESKRTMGARTSPSGSPDEEPDYVNGDVATTEKI.

In terms of assembly, when phosphorylated, interacts with GRB2. May also interact with SOS1, GAB1 and CBL. In terms of processing, phosphorylated on tyrosines following cross-linking of BCR in B-cells, high affinity IgG receptor (FCGR1) in myeloid cells, or high affinity IgE receptor (FCER1) in mast cells; which induces the recruitment of GRB2.

It is found in the cell membrane. Involved in FCER1 (high affinity immunoglobulin epsilon receptor)-mediated signaling in mast cells. May also be involved in BCR (B-cell antigen receptor)-mediated signaling in B-cells and FCGR1 (high affinity immunoglobulin gamma Fc receptor I)-mediated signaling in myeloid cells. Couples activation of these receptors and their associated kinases with distal intracellular events through the recruitment of GRB2. This Rattus norvegicus (Rat) protein is Linker for activation of T-cells family member 2 (Lat2).